The primary structure comprises 213 residues: Putative tRNA methyltransferase MPN_351 (213 aa).

This sequence belongs to the TrmK family.

The protein localises to the cytoplasm. The chain is Putative tRNA methyltransferase MPN_351 from Mycoplasma pneumoniae (strain ATCC 29342 / M129 / Subtype 1) (Mycoplasmoides pneumoniae).